A 468-amino-acid polypeptide reads, in one-letter code: Adenylyltransferase and sulfurtransferase MOCS3-1 (468 aa).

ATP contacts are provided by residues Gly111, Asp132, Asn139–Arg143, Lys156, and Asp200–Asn201. Residues Cys241 and Cys244 each contribute to the Zn(2+) site. Cys258 functions as the Glycyl thioester intermediate; for adenylyltransferase activity in the catalytic mechanism. Residues Cys316 and Cys319 each contribute to the Zn(2+) site. One can recognise a Rhodanese domain in the interval Asp371–Pro466. The Cysteine persulfide intermediate; for sulfurtransferase activity role is filled by Cys426.

In the N-terminal section; belongs to the HesA/MoeB/ThiF family. UBA4 subfamily. The cofactor is Zn(2+).

Its subcellular location is the cytoplasm. The enzyme catalyses [molybdopterin-synthase sulfur-carrier protein]-C-terminal Gly-Gly + ATP + H(+) = [molybdopterin-synthase sulfur-carrier protein]-C-terminal Gly-Gly-AMP + diphosphate. It catalyses the reaction [molybdopterin-synthase sulfur-carrier protein]-C-terminal Gly-Gly-AMP + S-sulfanyl-L-cysteinyl-[cysteine desulfurase] + AH2 = [molybdopterin-synthase sulfur-carrier protein]-C-terminal-Gly-aminoethanethioate + L-cysteinyl-[cysteine desulfurase] + A + AMP + 2 H(+). The protein operates within tRNA modification; 5-methoxycarbonylmethyl-2-thiouridine-tRNA biosynthesis. It functions in the pathway cofactor biosynthesis; molybdopterin biosynthesis. Its function is as follows. Plays a central role in 2-thiolation of mcm(5)S(2)U at tRNA wobble positions of cytosolic tRNA(Lys), tRNA(Glu) and tRNA(Gln). Also essential during biosynthesis of the molybdenum cofactor. Acts by mediating the C-terminal thiocarboxylation of sulfur carriers URM1 and MOCS2A. Its N-terminus first activates URM1 and MOCS2A as acyl-adenylates (-COAMP), then the persulfide sulfur on the catalytic cysteine is transferred to URM1 and MOCS2A to form thiocarboxylation (-COSH) of their C-terminus. The reaction probably involves hydrogen sulfide that is generated from the persulfide intermediate and that acts as a nucleophile towards URM1 and MOCS2A. Subsequently, a transient disulfide bond is formed. Does not use thiosulfate as sulfur donor; NFS1 probably acting as a sulfur donor for thiocarboxylation reactions. This Zea mays (Maize) protein is Adenylyltransferase and sulfurtransferase MOCS3-1.